A 96-amino-acid polypeptide reads, in one-letter code: GPLAVAINAAYMQTYIGGVSCPYICSRRLNHGVLLVGYGSAGYAPIRLKEKPYWVIKNSWGENWGENGYYKICRGRNICGVDSMVSTVAAVHTTSQ.

Cysteines 25 and 79 form a disulfide. Catalysis depends on residues His-31 and Asn-58.

This sequence belongs to the peptidase C1 family.

This is Cysteine proteinase from Carica papaya (Papaya).